Consider the following 157-residue polypeptide: Trafficking protein particle complex subunit 6b (157 aa).

The protein belongs to the TRAPP small subunits family. BET3 subfamily. In terms of assembly, homodimer. Part of a TRAPP complex.

Its subcellular location is the golgi apparatus. It localises to the cis-Golgi network. The protein resides in the endoplasmic reticulum. Component of a transport protein particle (TRAPP) complex that may function in specific stages of inter-organelle traffic. Specifically involved in the early development of neural circuitry, likely by controlling the frequency and amplitude of intracellular calcium transients implicated in the regulation of neuron differentiation and survival. This is Trafficking protein particle complex subunit 6b from Danio rerio (Zebrafish).